Consider the following 502-residue polypeptide: Aspartyl/glutamyl-tRNA(Asn/Gln) amidotransferase subunit B (502 aa).

Belongs to the GatB/GatE family. GatB subfamily. Heterotrimer of A, B and C subunits.

The enzyme catalyses L-glutamyl-tRNA(Gln) + L-glutamine + ATP + H2O = L-glutaminyl-tRNA(Gln) + L-glutamate + ADP + phosphate + H(+). The catalysed reaction is L-aspartyl-tRNA(Asn) + L-glutamine + ATP + H2O = L-asparaginyl-tRNA(Asn) + L-glutamate + ADP + phosphate + 2 H(+). Its function is as follows. Allows the formation of correctly charged Asn-tRNA(Asn) or Gln-tRNA(Gln) through the transamidation of misacylated Asp-tRNA(Asn) or Glu-tRNA(Gln) in organisms which lack either or both of asparaginyl-tRNA or glutaminyl-tRNA synthetases. The reaction takes place in the presence of glutamine and ATP through an activated phospho-Asp-tRNA(Asn) or phospho-Glu-tRNA(Gln). The protein is Aspartyl/glutamyl-tRNA(Asn/Gln) amidotransferase subunit B of Pseudarthrobacter chlorophenolicus (strain ATCC 700700 / DSM 12829 / CIP 107037 / JCM 12360 / KCTC 9906 / NCIMB 13794 / A6) (Arthrobacter chlorophenolicus).